Reading from the N-terminus, the 546-residue chain is CTP synthase (546 aa).

The amidoligase domain stretch occupies residues 1–266 (MARYIFITGG…DTEVLDVFGL (266 aa)). Residue Ser13 coordinates CTP. Ser13 contributes to the UTP binding site. ATP is bound at residue 14-19 (SLGKGL). An L-glutamine-binding site is contributed by Tyr54. Position 71 (Asp71) interacts with ATP. Residues Asp71 and Glu140 each coordinate Mg(2+). CTP contacts are provided by residues 147-149 (DIE), 187-192 (KTKPTQ), and Lys223. Residues 187-192 (KTKPTQ) and Lys223 contribute to the UTP site. The Glutamine amidotransferase type-1 domain maps to 293 to 545 (NIAIVGKYTG…IGAAKERSRL (253 aa)). Residue Ala357 coordinates L-glutamine. The active-site Nucleophile; for glutamine hydrolysis is the Cys384. L-glutamine is bound by residues 385–388 (FGMQ), Glu408, and Arg473. Active-site residues include His518 and Glu520.

This sequence belongs to the CTP synthase family. As to quaternary structure, homotetramer.

The enzyme catalyses UTP + L-glutamine + ATP + H2O = CTP + L-glutamate + ADP + phosphate + 2 H(+). It catalyses the reaction L-glutamine + H2O = L-glutamate + NH4(+). It carries out the reaction UTP + NH4(+) + ATP = CTP + ADP + phosphate + 2 H(+). It participates in pyrimidine metabolism; CTP biosynthesis via de novo pathway; CTP from UDP: step 2/2. With respect to regulation, allosterically activated by GTP, when glutamine is the substrate; GTP has no effect on the reaction when ammonia is the substrate. The allosteric effector GTP functions by stabilizing the protein conformation that binds the tetrahedral intermediate(s) formed during glutamine hydrolysis. Inhibited by the product CTP, via allosteric rather than competitive inhibition. Catalyzes the ATP-dependent amination of UTP to CTP with either L-glutamine or ammonia as the source of nitrogen. Regulates intracellular CTP levels through interactions with the four ribonucleotide triphosphates. This is CTP synthase from Phenylobacterium zucineum (strain HLK1).